Consider the following 151-residue polypeptide: Deoxyuridine 5'-triphosphate nucleotidohydrolase (151 aa).

Residues R70–G72, N83, L87–D89, and M97 contribute to the substrate site.

This sequence belongs to the dUTPase family. The cofactor is Mg(2+).

The catalysed reaction is dUTP + H2O = dUMP + diphosphate + H(+). It participates in pyrimidine metabolism; dUMP biosynthesis; dUMP from dCTP (dUTP route): step 2/2. In terms of biological role, this enzyme is involved in nucleotide metabolism: it produces dUMP, the immediate precursor of thymidine nucleotides and it decreases the intracellular concentration of dUTP so that uracil cannot be incorporated into DNA. The sequence is that of Deoxyuridine 5'-triphosphate nucleotidohydrolase from Ectopseudomonas mendocina (strain ymp) (Pseudomonas mendocina).